Reading from the N-terminus, the 388-residue chain is Leucine aminopeptidase 1 (388 aa).

The signal sequence occupies residues 1 to 19; that stretch reads MKSLSLLALAAIAPPAAVA. A propeptide spanning residues 20–88 is cleaved from the precursor; that stretch reads AVVDHQVPFE…SVKSHERIQV (69 aa). N-linked (GlcNAc...) asparagine glycosylation is present at N180. H188, D207, E246, and D273 together coordinate Zn(2+). Residues C322 and C326 are joined by a disulfide bond. Residue H355 participates in Zn(2+) binding.

Belongs to the peptidase M28 family. M28E subfamily. In terms of assembly, monomer. Requires Zn(2+) as cofactor.

It localises to the secreted. In terms of biological role, extracellular aminopeptidase that allows assimilation of proteinaceous substrates. The sequence is that of Leucine aminopeptidase 1 (LAP1) from Coccidioides posadasii (strain RMSCC 757 / Silveira) (Valley fever fungus).